The sequence spans 208 residues: Fibroblast growth factor 6 (208 aa).

An N-terminal signal peptide occupies residues 1 to 37 (MALGQKLFITMSRGAGRLQGTLWALVFLGILVGMVVP). Asparagine 45 is a glycosylation site (N-linked (GlcNAc...) asparagine). A disulfide bond links cysteine 90 and cysteine 157.

This sequence belongs to the heparin-binding growth factors family. As to quaternary structure, interacts with FGFR1, FGFR2 and FGFR4. Affinity between fibroblast growth factors (FGFs) and their receptors is increased by heparan sulfate glycosaminoglycans that function as coreceptors. As to expression, leukemia cell lines with platelet/ megakaryocytic differentiation potential.

Its subcellular location is the secreted. It is found in the extracellular space. In terms of biological role, plays an important role in the regulation of cell proliferation, cell differentiation, angiogenesis and myogenesis, and is required for normal muscle regeneration. The chain is Fibroblast growth factor 6 (FGF6) from Homo sapiens (Human).